Here is a 289-residue protein sequence, read N- to C-terminus: Leucine--tRNA ligase subunit beta (289 aa).

Residues lysine 45 to serine 49 carry the 'KMSKS' region motif. Lysine 48 lines the ATP pocket.

This sequence belongs to the class-I aminoacyl-tRNA synthetase family. As to quaternary structure, seems to consist of an alpha chain and a beta chain.

It is found in the cytoplasm. It catalyses the reaction tRNA(Leu) + L-leucine + ATP = L-leucyl-tRNA(Leu) + AMP + diphosphate. This is Leucine--tRNA ligase subunit beta (leuS') from Aquifex aeolicus (strain VF5).